A 185-amino-acid chain; its full sequence is Ribosome-recycling factor (185 aa).

Belongs to the RRF family.

It is found in the cytoplasm. Responsible for the release of ribosomes from messenger RNA at the termination of protein biosynthesis. May increase the efficiency of translation by recycling ribosomes from one round of translation to another. The chain is Ribosome-recycling factor from Streptomyces avermitilis (strain ATCC 31267 / DSM 46492 / JCM 5070 / NBRC 14893 / NCIMB 12804 / NRRL 8165 / MA-4680).